The primary structure comprises 997 residues: uncharacterized protein (997 aa).

Belongs to the MG414/MG415 family.

This is an uncharacterized protein from Mycoplasma pneumoniae (strain ATCC 29342 / M129 / Subtype 1) (Mycoplasmoides pneumoniae).